The following is a 906-amino-acid chain: Protein translocase subunit SecA (906 aa).

Residues Q87, 105-109, and D507 each bind ATP; that span reads GEGKT. Positions 890, 892, 901, and 902 each coordinate Zn(2+).

Belongs to the SecA family. As to quaternary structure, monomer and homodimer. Part of the essential Sec protein translocation apparatus which comprises SecA, SecYEG and auxiliary proteins SecDF-YajC and YidC. Zn(2+) serves as cofactor.

It localises to the cell inner membrane. The protein localises to the cytoplasm. It catalyses the reaction ATP + H2O + cellular proteinSide 1 = ADP + phosphate + cellular proteinSide 2.. Its function is as follows. Part of the Sec protein translocase complex. Interacts with the SecYEG preprotein conducting channel. Has a central role in coupling the hydrolysis of ATP to the transfer of proteins into and across the cell membrane, serving both as a receptor for the preprotein-SecB complex and as an ATP-driven molecular motor driving the stepwise translocation of polypeptide chains across the membrane. In Thiobacillus denitrificans (strain ATCC 25259 / T1), this protein is Protein translocase subunit SecA.